We begin with the raw amino-acid sequence, 464 residues long: Cysteine--tRNA ligase (464 aa).

Residue Cys30 participates in Zn(2+) binding. The 'HIGH' region signature appears at 32–42; that stretch reads MTVYDYCHIGH. Residues Cys214, His239, and Glu243 each contribute to the Zn(2+) site. The 'KMSKS' region motif lies at 271 to 275; that stretch reads KMSKS. Lys274 contacts ATP.

It belongs to the class-I aminoacyl-tRNA synthetase family. As to quaternary structure, monomer. The cofactor is Zn(2+).

The protein localises to the cytoplasm. It carries out the reaction tRNA(Cys) + L-cysteine + ATP = L-cysteinyl-tRNA(Cys) + AMP + diphosphate. The chain is Cysteine--tRNA ligase from Janthinobacterium sp. (strain Marseille) (Minibacterium massiliensis).